The chain runs to 199 residues: NAD(P)H dehydrogenase (quinone) (199 aa).

The 187-residue stretch at 4–190 (VLVLYYSAYG…DGARYQGRKI (187 aa)) folds into the Flavodoxin-like domain. FMN contacts are provided by residues 10–15 (SAYGHI) and 78–80 (TRF). Tyr-12 contacts NAD(+). Trp-98 is a binding site for substrate. Residues 113-119 (STATQHG) and His-134 each bind FMN.

The protein belongs to the WrbA family. FMN serves as cofactor.

It catalyses the reaction a quinone + NADH + H(+) = a quinol + NAD(+). The enzyme catalyses a quinone + NADPH + H(+) = a quinol + NADP(+). The polypeptide is NAD(P)H dehydrogenase (quinone) (Xanthobacter autotrophicus (strain ATCC BAA-1158 / Py2)).